A 448-amino-acid polypeptide reads, in one-letter code: MANVVENLGKLERRVTISLPKDTVQKEIDARIQKLAKTVRMPGFRPGKVPVKMVAQQYAGQVEAEVLSDKIGQEFFTISRAENLRVAGQPSFEPKQEQAEGAYAFDATFEVYPEVKIGDLATAEVERSTTSIGDAEIDRTLDILRKQRVHFHARGEAGEHGDGGADTAAKNGDRVTVDFVGKIDDVAFQGGTAEDFPFVLGEGRMLPEFETAALGLKVGESRTFDLAFPEDYHGKDVAGKTAQFTVTMKKIEWPHLPEIDGEFAKSLGIEDGDLTKMRGEIKDNLEREAKRRTQSIVKNQVMDALLKISELDVPKALIEQDQQRLVEMARQDLAQRGVPNAKDAPIPAEMFTEQAERRVKLGLVLAELVKSNGLEAKPEQIRAEVDEFAKSYEDPKEVVRWYYSNQQRLAEMEAFVVESNVVDFVLGKAKVTDKEVSFEALASASAQA.

In terms of domain architecture, PPIase FKBP-type spans 172–257 (GDRVTVDFVG…MKKIEWPHLP (86 aa)).

It belongs to the FKBP-type PPIase family. Tig subfamily.

The protein localises to the cytoplasm. It carries out the reaction [protein]-peptidylproline (omega=180) = [protein]-peptidylproline (omega=0). Involved in protein export. Acts as a chaperone by maintaining the newly synthesized protein in an open conformation. Functions as a peptidyl-prolyl cis-trans isomerase. The polypeptide is Trigger factor (Burkholderia lata (strain ATCC 17760 / DSM 23089 / LMG 22485 / NCIMB 9086 / R18194 / 383)).